A 345-amino-acid polypeptide reads, in one-letter code: uncharacterized protein (345 aa).

Residues 1–198 (MDVLSAVLLA…LSEGLLDHEE (198 aa)) form the CNNM transmembrane domain. A run of 2 helical transmembrane segments spans residues 3–23 (VLSA…FVGA) and 95–115 (VPPA…HVLL). 2 consecutive CBS domains span residues 217–280 (AVPL…PQTV) and 285–342 (VVRP…MRDG). The chain crosses the membrane as a helical span at residues 312 to 332 (LALVTADNGSVVGMVALEDVV).

The protein belongs to the TerC family.

The protein localises to the cell membrane. This is an uncharacterized protein from Mycobacterium tuberculosis (strain ATCC 25618 / H37Rv).